Here is a 314-residue protein sequence, read N- to C-terminus: Ribosomal RNA small subunit methyltransferase A (314 aa).

Positions 29, 31, 56, 77, 107, and 126 each coordinate S-adenosyl-L-methionine. Residues 291-314 (PKADDAGDDADAQAKADGAQVSTL) form a disordered region. A compositionally biased stretch (low complexity) spans 303 to 314 (QAKADGAQVSTL).

The protein belongs to the class I-like SAM-binding methyltransferase superfamily. rRNA adenine N(6)-methyltransferase family. RsmA subfamily.

Its subcellular location is the cytoplasm. The enzyme catalyses adenosine(1518)/adenosine(1519) in 16S rRNA + 4 S-adenosyl-L-methionine = N(6)-dimethyladenosine(1518)/N(6)-dimethyladenosine(1519) in 16S rRNA + 4 S-adenosyl-L-homocysteine + 4 H(+). In terms of biological role, specifically dimethylates two adjacent adenosines (A1518 and A1519) in the loop of a conserved hairpin near the 3'-end of 16S rRNA in the 30S particle. May play a critical role in biogenesis of 30S subunits. In Mycolicibacterium gilvum (strain PYR-GCK) (Mycobacterium gilvum (strain PYR-GCK)), this protein is Ribosomal RNA small subunit methyltransferase A.